The chain runs to 177 residues: Large ribosomal subunit protein uL5 (177 aa).

It belongs to the universal ribosomal protein uL5 family. Part of the 50S ribosomal subunit. Interacts with protein L18 and the 5S rRNA, and probably with tRNAs. Forms a bridge to the 30S subunit in the 70S ribosome.

This is 1 of 5 proteins that mediates the attachment of the 5S rRNA onto the large ribosomal subunit, stabilizing the orientation of adjacent RNA domains. Forms part of the central protuberance. Modeling places the A and P site tRNAs in close proximity to this protein; the 5S rRNA and some of its associated proteins might help stabilize positioning of ribosome-bound tRNAs. In the 70S ribosome it is thought to contact protein S13 of the 30S subunit (bridge B1b), connecting the 2 subunits; this bridge is implicated in subunit movement. In Haloarcula marismortui (strain ATCC 43049 / DSM 3752 / JCM 8966 / VKM B-1809) (Halobacterium marismortui), this protein is Large ribosomal subunit protein uL5 (rpl5).